Consider the following 437-residue polypeptide: MQVSVENTSALERRMTIAVPAERVENEVNKRLQQTAKRAKIAGFRPGKVPMNVIRQRFEADARQEAFGDLVQASFYEAIVEQKLNPAGAPAVEPKSFEKGKDLEFVAIFEVFPEFTVSGLESINVERLSAEVADADLDNMLEVLRKQNTRFEAVERAAQNDDQVNIDFVGKVDGEVFAGGSAKGTQLVLGSGRMIPGFEDGLVGAKAGEERVVNVTFPEDYQNLDLAGKAAEFTITVNSVSAPVLPELNEEFFAQFGIKESTLEGFRAEVRKNMERELRQAIKTKVKNQVMDGLLAANPIEVPKALLENEVNRLRVQAVQQFGGNIKPEQLPVELFEEQAKRRVVLGLIVAEVVKQFELKPDDAKVREMIEEMASAYQEPEQVIAWYYKNDQQLNEVRSVVLEEQVVDTVLQKATVTDKSVSYEDAVKPAEAPAAAE.

Positions 161–246 (DDQVNIDFVG…VNSVSAPVLP (86 aa)) constitute a PPIase FKBP-type domain.

The protein belongs to the FKBP-type PPIase family. Tig subfamily.

It is found in the cytoplasm. It carries out the reaction [protein]-peptidylproline (omega=180) = [protein]-peptidylproline (omega=0). Functionally, involved in protein export. Acts as a chaperone by maintaining the newly synthesized protein in an open conformation. Functions as a peptidyl-prolyl cis-trans isomerase. In Pseudomonas putida (strain GB-1), this protein is Trigger factor.